A 519-amino-acid chain; its full sequence is ATP synthase subunit alpha, mitochondrial (519 aa).

Residue 188–195 (GDRQTGKS) coordinates ATP.

The protein belongs to the ATPase alpha/beta chains family. F-type ATPases have 2 components, CF(1) - the catalytic core - and CF(0) - the membrane proton channel. CF(1) has five subunits: alpha(3), beta(3), gamma(1), delta(1), epsilon(1). CF(0) has three main subunits: a, b and c.

Its subcellular location is the mitochondrion. It localises to the mitochondrion inner membrane. Its function is as follows. Mitochondrial membrane ATP synthase (F(1)F(0) ATP synthase or Complex V) produces ATP from ADP in the presence of a proton gradient across the membrane which is generated by electron transport complexes of the respiratory chain. F-type ATPases consist of two structural domains, F(1) - containing the extramembraneous catalytic core, and F(0) - containing the membrane proton channel, linked together by a central stalk and a peripheral stalk. During catalysis, ATP synthesis in the catalytic domain of F(1) is coupled via a rotary mechanism of the central stalk subunits to proton translocation. Subunits alpha and beta form the catalytic core in F(1). Rotation of the central stalk against the surrounding alpha(3)beta(3) subunits leads to hydrolysis of ATP in three separate catalytic sites on the beta subunits. Subunit alpha does not bear the catalytic high-affinity ATP-binding sites. This Dictyostelium citrinum (Slime mold) protein is ATP synthase subunit alpha, mitochondrial (atp1).